A 132-amino-acid polypeptide reads, in one-letter code: Small ribosomal subunit protein uS8 (132 aa).

It belongs to the universal ribosomal protein uS8 family. As to quaternary structure, part of the 30S ribosomal subunit. Contacts proteins S5 and S12.

Functionally, one of the primary rRNA binding proteins, it binds directly to 16S rRNA central domain where it helps coordinate assembly of the platform of the 30S subunit. This Streptococcus sanguinis (strain SK36) protein is Small ribosomal subunit protein uS8.